The sequence spans 302 residues: GTP cyclohydrolase FolE2 (302 aa).

It belongs to the GTP cyclohydrolase IV family.

It catalyses the reaction GTP + H2O = 7,8-dihydroneopterin 3'-triphosphate + formate + H(+). It functions in the pathway cofactor biosynthesis; 7,8-dihydroneopterin triphosphate biosynthesis; 7,8-dihydroneopterin triphosphate from GTP: step 1/1. In terms of biological role, converts GTP to 7,8-dihydroneopterin triphosphate. The polypeptide is GTP cyclohydrolase FolE2 (Pseudoalteromonas translucida (strain TAC 125)).